The primary structure comprises 445 residues: N-succinylarginine dihydrolase (445 aa).

Substrate-binding positions include 19–28, Asn-110, and 137–138; these read AGLSFGNVAS and HR. The active site involves Glu-174. Substrate is bound at residue Arg-214. Residue His-250 is part of the active site. Substrate-binding residues include Asp-252 and Asn-363. Cys-369 serves as the catalytic Nucleophile.

This sequence belongs to the succinylarginine dihydrolase family. Homodimer.

It catalyses the reaction N(2)-succinyl-L-arginine + 2 H2O + 2 H(+) = N(2)-succinyl-L-ornithine + 2 NH4(+) + CO2. It functions in the pathway amino-acid degradation; L-arginine degradation via AST pathway; L-glutamate and succinate from L-arginine: step 2/5. Its function is as follows. Catalyzes the hydrolysis of N(2)-succinylarginine into N(2)-succinylornithine, ammonia and CO(2). In Shewanella halifaxensis (strain HAW-EB4), this protein is N-succinylarginine dihydrolase.